Consider the following 201-residue polypeptide: Cell division protein SepF (201 aa).

The segment covering 27-38 (VQERTSVQRDSR) has biased composition (basic and acidic residues). The segment at 27–99 (VQERTSVQRD…PRVQNKDSVR (73 aa)) is disordered. The segment covering 43-54 (QEASQRSHMTNS) has biased composition (polar residues). The span at 72–81 (NRQERQRVQR) shows a compositional bias: basic and acidic residues. The span at 83-92 (NAYQQATPRV) shows a compositional bias: polar residues.

This sequence belongs to the SepF family. Homodimer. Interacts with FtsZ.

It localises to the cytoplasm. Functionally, cell division protein that is part of the divisome complex and is recruited early to the Z-ring. Probably stimulates Z-ring formation, perhaps through the cross-linking of FtsZ protofilaments. Its function overlaps with FtsA. This is Cell division protein SepF from Streptococcus agalactiae serotype V (strain ATCC BAA-611 / 2603 V/R).